The chain runs to 578 residues: ATP-dependent RNA helicase has-1 (578 aa).

Positions 1-91 are disordered; the sequence is MASEFSKKRK…KDAEAGDELT (91 aa). Basic and acidic residues predominate over residues 13 to 26; sequence DAKIATEDGAATDK. A compositionally biased stretch (basic residues) spans 27-36; sequence KTKKVKKDKK. Acidic residues-rich tracts occupy residues 43-54 and 77-88; these read EVVEDATPEEEN and EDSDDKDAEAGD. The short motif at 107–135 is the Q motif element; that stretch reads TDFSELNLSDKTMKAIAEMGFTKMTEIQR. The 176-residue stretch at 138–313 folds into the Helicase ATP-binding domain; it reads IPPLLAGKDV…RISLRPGPLY (176 aa). Residue 151-158 participates in ATP binding; it reads AKTGSGKT. The short motif at 260 to 263 is the DEAD box element; sequence DEAD. The Bipartite nuclear localization signal motif lies at 339 to 355; sequence KRFLLLFSFLKKMQKKK. Residues 343-497 form the Helicase C-terminal domain; that stretch reads LLFSFLKKMQ…NVQSQLEKLI (155 aa). Residues 556 to 578 form a disordered region; sequence SMSRDKKQTSRRAYGSQPKQNRH.

This sequence belongs to the DEAD box helicase family. DDX18/HAS1 subfamily. Associates in the nucleolus with the 60S and pre-60S ribosomal subunits.

Its subcellular location is the nucleus. The protein resides in the nucleolus. The catalysed reaction is ATP + H2O = ADP + phosphate + H(+). In terms of biological role, ATP-dependent RNA helicase involved in 40S ribosomal subunit biogenesis. Required for the processing and cleavage of 35S pre-rRNA at sites A0, A1, and A2, leading to mature 18S rRNA. This is ATP-dependent RNA helicase has-1 (has-1) from Neurospora crassa (strain ATCC 24698 / 74-OR23-1A / CBS 708.71 / DSM 1257 / FGSC 987).